A 972-amino-acid chain; its full sequence is DNA topoisomerase 1 (972 aa).

Disordered regions lie at residues 1–210 and 300–416; these read MSGD…VFVK and HEQS…RQKA. Over residues 11–31 the composition is skewed to polar residues; that stretch reads IHIQNGGSCEVVQSNGVTTNG. Over residues 32–50 the composition is skewed to basic residues; it reads HGHHHHHHSSSSSSSKHKS. 3 stretches are compositionally biased toward basic and acidic residues: residues 51 to 65, 72 to 86, and 93 to 103; these read SSKD…EHKS, SKEH…DRHK, and KHRDKDKERDG. Over residues 104–114 the composition is skewed to low complexity; the sequence is SSNSHRSGSSS. Residues 125 to 138 are compositionally biased toward basic residues; the sequence is SKHKSSSGHHKRSS. The span at 139 to 151 shows a compositional bias: basic and acidic residues; it reads KDKERRDKDKDRG. Low complexity predominate over residues 173-183; it reads SHKSSSSSSSS. S303 is subject to Phosphoserine. Y304 carries the post-translational modification Phosphotyrosine. Over residues 316–330 the composition is skewed to acidic residues; sequence HDDDADEMNDDEEDV. 3 interaction with DNA regions span residues 648–649, 711–716, and 807–809; these read KY, RAGNEK, and TAK. One can recognise a Topo IB-type catalytic domain in the interval 655–972; the sequence is SSKLKGEKDH…VHMADENYRF (318 aa). Y930 functions as the O-(3'-phospho-DNA)-tyrosine intermediate in the catalytic mechanism.

It belongs to the type IB topoisomerase family. As to quaternary structure, interacts with Topors.

It is found in the nucleus. It localises to the cytoplasm. The catalysed reaction is ATP-independent breakage of single-stranded DNA, followed by passage and rejoining.. Functionally, releases the supercoiling and torsional tension of DNA introduced during the DNA replication and transcription by transiently cleaving and rejoining one strand of the DNA duplex. Introduces a single-strand break via transesterification at a target site in duplex DNA. The scissile phosphodiester is attacked by the catalytic tyrosine of the enzyme, resulting in the formation of a DNA-(3'-phosphotyrosyl)-enzyme intermediate and the expulsion of a 5'-OH DNA strand. The free DNA strand then undergoes passage around the unbroken strand thus removing DNA supercoils. Finally, in the religation step, the DNA 5'-OH attacks the covalent intermediate to expel the active-site tyrosine and restore the DNA phosphodiester backbone. The polypeptide is DNA topoisomerase 1 (Drosophila melanogaster (Fruit fly)).